Reading from the N-terminus, the 326-residue chain is Vascular endothelial growth factor D (326 aa).

Residues 1-21 (MYGEWAAVNILMMSYVYLVQG) form the signal peptide. Positions 22 to 93 (FSIEHRAVKD…SRSTSHRSTR (72 aa)) are excised as a propeptide. 3 disulfide bridges follow: cysteine 116–cysteine 158, cysteine 147–cysteine 194, and cysteine 151–cysteine 196. Residues asparagine 160 and asparagine 190 are each glycosylated (N-linked (GlcNAc...) asparagine). Positions 211–326 (SIQIPEEDQC…CRSMVFSLSP (116 aa)) are excised as a propeptide. A 1; approximate repeat occupies 227-242 (CPVDMLWDNTKCKCVL). The interval 227–317 (CPVDMLWDNT…KHKMFHPDTC (91 aa)) is 4 X 16 AA repeats of C-X(10)-C-X-C-X(1,3)-C. Tandem repeats lie at residues 263–278 (CGPH…ECVC) and 282–298 (CPGD…CFEC). Asparagine 292 carries N-linked (GlcNAc...) asparagine glycosylation. Residues 306–317 (CQKHKMFHPDTC) form a 4; truncated repeat.

Belongs to the PDGF/VEGF growth factor family. Homodimer; non-covalent and antiparallel. Post-translationally, undergoes a complex proteolytic maturation which generates a variety of processed secreted forms with increased activity toward VEGFR-3 and VEGFR-2. VEGF-D first form an antiparallel homodimer linked by disulfide bonds before secretion. The fully processed VEGF-D is composed mostly of two VEGF homology domains (VHDs) bound by non-covalent interactions. Highly expressed in the spleen, kidney, lung, tongue, ovary and mammary gland.

The protein resides in the secreted. In terms of biological role, growth factor active in angiogenesis, lymphangiogenesis and endothelial cell growth, stimulating their proliferation and migration and also has effects on the permeability of blood vessels. May function in the formation of the venous and lymphatic vascular systems during embryogenesis, and also in the maintenance of differentiated lymphatic endothelium in adults. Binds and activates VEGFR-3 (Flt4) receptor. This chain is Vascular endothelial growth factor D, found in Rattus norvegicus (Rat).